The sequence spans 125 residues: MERYLLVALGGALGSLLRYGLGALVQGSLGAGFPWSTLFVNALGSFLIGLTLRLSLEGALSGEARLFLAVGVLGGFTTFSSLSYETLALLQGGEVGKALLYAFGSLFLGLFLAFLGYRLGGALVG.

4 helical membrane passes run 5–25 (LLVA…GALV), 29–49 (LGAG…FLIG), 66–86 (LFLA…SYET), and 95–115 (VGKA…LAFL). G74 and T77 together coordinate Na(+).

This sequence belongs to the fluoride channel Fluc/FEX (TC 1.A.43) family.

It is found in the cell inner membrane. It catalyses the reaction fluoride(in) = fluoride(out). Na(+) is not transported, but it plays an essential structural role and its presence is essential for fluoride channel function. Fluoride-specific ion channel. Important for reducing fluoride concentration in the cell, thus reducing its toxicity. This is Fluoride-specific ion channel FluC from Thermus thermophilus (strain ATCC 27634 / DSM 579 / HB8).